A 95-amino-acid chain; its full sequence is Aspartyl/glutamyl-tRNA(Asn/Gln) amidotransferase subunit C (95 aa).

It belongs to the GatC family. Heterotrimer of A, B and C subunits.

The enzyme catalyses L-glutamyl-tRNA(Gln) + L-glutamine + ATP + H2O = L-glutaminyl-tRNA(Gln) + L-glutamate + ADP + phosphate + H(+). It carries out the reaction L-aspartyl-tRNA(Asn) + L-glutamine + ATP + H2O = L-asparaginyl-tRNA(Asn) + L-glutamate + ADP + phosphate + 2 H(+). Allows the formation of correctly charged Asn-tRNA(Asn) or Gln-tRNA(Gln) through the transamidation of misacylated Asp-tRNA(Asn) or Glu-tRNA(Gln) in organisms which lack either or both of asparaginyl-tRNA or glutaminyl-tRNA synthetases. The reaction takes place in the presence of glutamine and ATP through an activated phospho-Asp-tRNA(Asn) or phospho-Glu-tRNA(Gln). This chain is Aspartyl/glutamyl-tRNA(Asn/Gln) amidotransferase subunit C, found in Pseudomonas fluorescens (strain ATCC BAA-477 / NRRL B-23932 / Pf-5).